The sequence spans 164 residues: Ribosome-binding factor A (164 aa).

The protein belongs to the RbfA family. In terms of assembly, monomer. Binds 30S ribosomal subunits, but not 50S ribosomal subunits or 70S ribosomes.

The protein localises to the cytoplasm. Its function is as follows. One of several proteins that assist in the late maturation steps of the functional core of the 30S ribosomal subunit. Associates with free 30S ribosomal subunits (but not with 30S subunits that are part of 70S ribosomes or polysomes). Required for efficient processing of 16S rRNA. May interact with the 5'-terminal helix region of 16S rRNA. The sequence is that of Ribosome-binding factor A from Caulobacter sp. (strain K31).